Here is a 523-residue protein sequence, read N- to C-terminus: 2-isopropylmalate synthase (523 aa).

A Pyruvate carboxyltransferase domain is found at valine 5–tryptophan 267. 4 residues coordinate Mn(2+): aspartate 14, histidine 202, histidine 204, and asparagine 238. Residues arginine 392–valine 523 form a regulatory domain region.

Belongs to the alpha-IPM synthase/homocitrate synthase family. LeuA type 1 subfamily. As to quaternary structure, homodimer. The cofactor is Mn(2+).

It is found in the cytoplasm. The catalysed reaction is 3-methyl-2-oxobutanoate + acetyl-CoA + H2O = (2S)-2-isopropylmalate + CoA + H(+). It participates in amino-acid biosynthesis; L-leucine biosynthesis; L-leucine from 3-methyl-2-oxobutanoate: step 1/4. Functionally, catalyzes the condensation of the acetyl group of acetyl-CoA with 3-methyl-2-oxobutanoate (2-ketoisovalerate) to form 3-carboxy-3-hydroxy-4-methylpentanoate (2-isopropylmalate). This is 2-isopropylmalate synthase from Klebsiella pneumoniae (strain 342).